The following is a 383-amino-acid chain: Lipid-A-disaccharide synthase (383 aa).

This sequence belongs to the LpxB family.

It catalyses the reaction a lipid X + a UDP-2-N,3-O-bis[(3R)-3-hydroxyacyl]-alpha-D-glucosamine = a lipid A disaccharide + UDP + H(+). The protein operates within bacterial outer membrane biogenesis; LPS lipid A biosynthesis. Functionally, condensation of UDP-2,3-diacylglucosamine and 2,3-diacylglucosamine-1-phosphate to form lipid A disaccharide, a precursor of lipid A, a phosphorylated glycolipid that anchors the lipopolysaccharide to the outer membrane of the cell. The chain is Lipid-A-disaccharide synthase from Syntrophus aciditrophicus (strain SB).